A 323-amino-acid chain; its full sequence is MRNPQLNKHGELQHLLTIDGLPRSILTAILDTAAPFTEVAEREVKKLPLLRGKSIFNLFFENSTRTRTTFEIAAKRLSADVVNLNVSTSSAAKGESLLDTVDNLSAMQADMFVVRHAASGAPFLIAQHLFATGRDHIHVVNAGDGRHAHPTQGLLDMYTIRHFKRDFTNLTIAIVGDVLHSRVARSQIGALTTLGVPEVRVIGPKTLLPTDVERLGVRVFHDIREGLRGVDVVMMLRLQNERMNGALLPTPQEFYKVWGLTAEKLALAKPDAIVMHPGPMNRGVEIDSSVADGAQAVILPQVTFGIAVRMAVMSMLAGQQGSK.

2 residues coordinate carbamoyl phosphate: Arg65 and Thr66. Position 93 (Lys93) interacts with L-aspartate. Carbamoyl phosphate-binding residues include Arg115, His149, and Gln152. L-aspartate-binding residues include Arg182 and Arg237. 2 residues coordinate carbamoyl phosphate: Gly278 and Pro279.

It belongs to the aspartate/ornithine carbamoyltransferase superfamily. ATCase family. As to quaternary structure, heterododecamer (2C3:3R2) of six catalytic PyrB chains organized as two trimers (C3), and six regulatory PyrI chains organized as three dimers (R2).

It catalyses the reaction carbamoyl phosphate + L-aspartate = N-carbamoyl-L-aspartate + phosphate + H(+). The protein operates within pyrimidine metabolism; UMP biosynthesis via de novo pathway; (S)-dihydroorotate from bicarbonate: step 2/3. Its function is as follows. Catalyzes the condensation of carbamoyl phosphate and aspartate to form carbamoyl aspartate and inorganic phosphate, the committed step in the de novo pyrimidine nucleotide biosynthesis pathway. The polypeptide is Aspartate carbamoyltransferase catalytic subunit (Aromatoleum aromaticum (strain DSM 19018 / LMG 30748 / EbN1) (Azoarcus sp. (strain EbN1))).